The chain runs to 447 residues: GTPase Der (447 aa).

2 EngA-type G domains span residues 3-167 (PVIA…FAQR) and 181-354 (IRLA…AAAM). Residues 9 to 16 (GRPNVGKS), 56 to 60 (DTGGF), 119 to 122 (NKAE), 187 to 194 (GRPNVGKS), 234 to 238 (DTAGI), and 299 to 302 (NKWD) each bind GTP. Residues 355 to 439 (SNLSTPKLTR…PLRIELRSGK (85 aa)) enclose the KH-like domain.

The protein belongs to the TRAFAC class TrmE-Era-EngA-EngB-Septin-like GTPase superfamily. EngA (Der) GTPase family. Associates with the 50S ribosomal subunit.

Functionally, GTPase that plays an essential role in the late steps of ribosome biogenesis. In Herminiimonas arsenicoxydans, this protein is GTPase Der.